The sequence spans 164 residues: MSQSICSTGLRWLWLVVIVLIIDLGSKYLILQNFALGDTVPLFPSLNLHASAYYGAAFSFLADSGGWQRWFFAGIAIGISVLLAVMMYRSKATQKLNNIAYALIIGGALGNLFDRLWHGFVVDMIDFYVGDWHFATFNLADTAICVGAALIVLEGFLPSKAKKQ.

A run of 4 helical transmembrane segments spans residues 12–32 (WLWLVVIVLIIDLGSKYLILQ), 42–62 (LFPSLNLHASAYYGAAFSFLA), 70–90 (WFFAGIAIGISVLLAVMMYRS), and 102–122 (ALIIGGALGNLFDRLWHGFVV). Catalysis depends on residues aspartate 123 and aspartate 141. Residues 137–157 (FNLADTAICVGAALIVLEGFL) form a helical membrane-spanning segment.

This sequence belongs to the peptidase A8 family.

It is found in the cell inner membrane. It catalyses the reaction Release of signal peptides from bacterial membrane prolipoproteins. Hydrolyzes -Xaa-Yaa-Zaa-|-(S,diacylglyceryl)Cys-, in which Xaa is hydrophobic (preferably Leu), and Yaa (Ala or Ser) and Zaa (Gly or Ala) have small, neutral side chains.. The protein operates within protein modification; lipoprotein biosynthesis (signal peptide cleavage). Its function is as follows. This protein specifically catalyzes the removal of signal peptides from prolipoproteins. In Shigella flexneri serotype 5b (strain 8401), this protein is Lipoprotein signal peptidase.